Here is a 609-residue protein sequence, read N- to C-terminus: Arginine--tRNA ligase (609 aa).

A 'HIGH' region motif is present at residues 132–142 (ANPTSSLHVGH).

The protein belongs to the class-I aminoacyl-tRNA synthetase family. Monomer.

It localises to the cytoplasm. It carries out the reaction tRNA(Arg) + L-arginine + ATP = L-arginyl-tRNA(Arg) + AMP + diphosphate. This is Arginine--tRNA ligase from Psychrobacter sp. (strain PRwf-1).